We begin with the raw amino-acid sequence, 581 residues long: Coiled-coil domain-containing protein 102A (581 aa).

Disordered regions lie at residues 1-61 (MNHT…GLGC), 156-219 (QRVR…IGTD), 496-517 (QAED…SLDE), and 534-581 (SRLR…LQIP). A compositionally biased stretch (low complexity) spans 39–59 (TPSPSGGTPSSSPPLLLSPGL). A coiled-coil region spans residues 70–164 (REELRLRELE…AQRVRAEQSS (95 aa)). The segment covering 161–184 (EQSSPENASTAPESISSTASTHSN) has biased composition (polar residues). Positions 185–202 (QPREAEIKQDNQDEEGVR) are enriched in basic and acidic residues. Residues 270-541 (AALEEDTSKL…LQSRLRRQQN (272 aa)) are a coiled coil. Residues 559-581 (EDADGPPSDPDEDEEEELQLQIP) show a composition bias toward acidic residues.

This is Coiled-coil domain-containing protein 102A (ccdc102a) from Danio rerio (Zebrafish).